Consider the following 229-residue polypeptide: Large ribosomal subunit protein uL1 (229 aa).

Belongs to the universal ribosomal protein uL1 family. In terms of assembly, part of the 50S ribosomal subunit.

Its function is as follows. Binds directly to 23S rRNA. The L1 stalk is quite mobile in the ribosome, and is involved in E site tRNA release. Protein L1 is also a translational repressor protein, it controls the translation of the L11 operon by binding to its mRNA. This chain is Large ribosomal subunit protein uL1, found in Clostridium botulinum (strain Alaska E43 / Type E3).